A 243-amino-acid chain; its full sequence is Chromosome partition protein MukE (243 aa).

The tract at residues 223 to 243 (LMENDTKSADEIDEEFDGEQE) is disordered. The span at 233-243 (EIDEEFDGEQE) shows a compositional bias: acidic residues.

Belongs to the MukE family. As to quaternary structure, interacts, and probably forms a ternary complex, with MukF and MukB. The complex formation is stimulated by calcium or magnesium.

It localises to the cytoplasm. It is found in the nucleoid. In terms of biological role, involved in chromosome condensation, segregation and cell cycle progression. May participate in facilitating chromosome segregation by condensation DNA from both sides of a centrally located replisome during cell division. Probably acts via its interaction with MukB and MukF. The protein is Chromosome partition protein MukE of Haemophilus influenzae (strain ATCC 51907 / DSM 11121 / KW20 / Rd).